We begin with the raw amino-acid sequence, 493 residues long: Glutamyl-tRNA(Gln) amidotransferase subunit A (493 aa).

Catalysis depends on charge relay system residues lysine 79 and serine 159. Serine 183 serves as the catalytic Acyl-ester intermediate.

The protein belongs to the amidase family. GatA subfamily. Heterotrimer of A, B and C subunits.

It carries out the reaction L-glutamyl-tRNA(Gln) + L-glutamine + ATP + H2O = L-glutaminyl-tRNA(Gln) + L-glutamate + ADP + phosphate + H(+). Its function is as follows. Allows the formation of correctly charged Gln-tRNA(Gln) through the transamidation of misacylated Glu-tRNA(Gln) in organisms which lack glutaminyl-tRNA synthetase. The reaction takes place in the presence of glutamine and ATP through an activated gamma-phospho-Glu-tRNA(Gln). This chain is Glutamyl-tRNA(Gln) amidotransferase subunit A, found in Brucella suis biovar 1 (strain 1330).